The primary structure comprises 418 residues: Actin-related protein 3B (418 aa).

This sequence belongs to the actin family. ARP3 subfamily. As to quaternary structure, interacts with the Arp2/3 complex composed of ARP2, ARP3, ARPC1B, ARPC1B/p41-ARC, ARPC2/p34-ARC, ARPC3/p21-ARC, ARPC4/p20-ARC and ARPC5/p16-ARC. Detected in fetal brain. Detected throughout the adult brain, in neurons from gray matter, but not in white matter. Detected in liver, skeletal muscle and pancreas. Detected in lung adenocarcinoma cells with low metastatic potential, but not in lung adenocarcinoma cells with high metastatic potential.

It localises to the cytoplasm. It is found in the cytoskeleton. Its subcellular location is the cell projection. Plays a role in the organization of the actin cytoskeleton. May function as ATP-binding component of the Arp2/3 complex which is involved in regulation of actin polymerization and together with an activating nucleation-promoting factor (NPF) mediates the formation of branched actin networks. May decrease the metastatic potential of tumors. The protein is Actin-related protein 3B (ACTR3B) of Homo sapiens (Human).